A 314-amino-acid chain; its full sequence is ATP synthase gamma chain (314 aa).

Belongs to the ATPase gamma chain family. F-type ATPases have 2 components, CF(1) - the catalytic core - and CF(0) - the membrane proton channel. CF(1) has five subunits: alpha(3), beta(3), gamma(1), delta(1), epsilon(1). CF(0) has three main subunits: a, b and c.

The protein resides in the cell membrane. Its function is as follows. Produces ATP from ADP in the presence of a proton gradient across the membrane. The gamma chain is believed to be important in regulating ATPase activity and the flow of protons through the CF(0) complex. The protein is ATP synthase gamma chain of Limosilactobacillus reuteri (strain DSM 20016) (Lactobacillus reuteri).